A 264-amino-acid polypeptide reads, in one-letter code: Eukaryotic translation initiation factor 6 (264 aa).

The protein belongs to the eIF-6 family. As to quaternary structure, monomer. Associates with the 60S ribosomal subunit.

It localises to the cytoplasm. The protein localises to the nucleus. Its subcellular location is the nucleolus. Functionally, binds to the 60S ribosomal subunit and prevents its association with the 40S ribosomal subunit to form the 80S initiation complex in the cytoplasm. May also be involved in ribosome biogenesis. This Toxoplasma gondii (strain ATCC 50861 / VEG) protein is Eukaryotic translation initiation factor 6.